The chain runs to 430 residues: Pre-B-cell leukemia transcription factor 1 (430 aa).

Positions 1 to 40 are disordered; the sequence is MDEQPRLMHSHAGVGMAGHPGLSQHLQDGAGGTEGEGGRK. Residues 38–232 form the PBC domain; it reads GRKQDIGDIL…VMILRSRFLD (195 aa). Positions 45–124 are PBC-A; the sequence is DILQQIMTIT…EGVAGPEKGG (80 aa). The interval 127-232 is PBC-B; the sequence is AAAAAAAAAS…VMILRSRFLD (106 aa). A DNA-binding region (homeobox; TALE-type) is located at residues 233 to 295; sequence ARRKRRNFNK…NKRIRYKKNI (63 aa). Disordered regions lie at residues 317 to 338 and 395 to 430; these read SAHG…SSSF and SPQG…DTSN. The segment covering 323–338 has biased composition (low complexity); sequence ANSPSTPNSAGSSSSF. Residues 407 to 418 are compositionally biased toward polar residues; sequence DATTPSSVTSPT.

It belongs to the TALE/PBX homeobox family. As to quaternary structure, forms a heterodimer with MEIS1 which binds DNA. The PBX1-MEIS1 heterodimer binds a cAMP-responsive sequence in CYP17. It also binds a consensus region in the SOX3 promoter. PBX1 forms heterotrimers with MEIS1 and a number of HOX proteins including HOXA9, HOXD4, HOXD9 and HOXD10. Forms heterodimers with HOXA1, HOXA5, HOXB7 and HOXB8 which bind the 5'-TGATTGAT-3' consensus sequence. Also forms heterodimers with HOXA5, HOXB7, HOXB8, HOXC8 and HOXD4 which bind the 5'-ATCAATCAA-3' consensus sequence. Interacts with PBXIP1. Interacts with TLX1. Interacts with FOXC1. Interacts with MN1. In terms of assembly, interacts with MEIS2 isoform 4, SP1, SP3 and KLF4. Part of a PDX1:PBX1b:MEIS2B complex; PBX1b recruits MEIS2B to the complex. Expressed in the kidney. Expressed in the endothelial cells of the glomeruli and interstitium (at protein level). Expressed in all tissues except in cells of the B and T lineage. Expressed strongly in kidney and brain.

Its subcellular location is the nucleus. Transcription factor which binds the DNA sequence 5'-TGATTGAT-3' as part of a heterodimer with HOX proteins such as HOXA1, HOXA5, HOXB7 and HOXB8. Binds to the DNA sequence 5'-TGATTGAC-3' in complex with a nuclear factor which is not a class I HOX protein. Has also been shown to bind the DNA sequence 5'-ATCAATCAA-3' cooperatively with HOXA5, HOXB7, HOXB8, HOXC8 and HOXD4. Acts as a transcriptional activator of PF4 in complex with MEIS1. Also activates transcription of SOX3 in complex with MEIS1 by binding to the 5'-TGATTGAC-3' consensus sequence. In natural killer cells, binds to the NFIL3 promoter and acts as a transcriptional activator of NFIL3, promoting natural killer cell development. Plays a role in the cAMP-dependent regulation of CYP17A1 gene expression via its cAMP-regulatory sequence (CRS1). Probably in complex with MEIS2, involved in transcriptional regulation by KLF4. Acts as a transcriptional activator of NKX2-5 and a transcriptional repressor of CDKN2B. Together with NKX2-5, required for spleen development through a mechanism that involves CDKN2B repression. In terms of biological role, as part of a PDX1:PBX1b:MEIS2B complex in pancreatic acinar cells, is involved in the transcriptional activation of the ELA1 enhancer; the complex binds to the enhancer B element and cooperates with the transcription factor 1 complex (PTF1) bound to the enhancer A element. This Homo sapiens (Human) protein is Pre-B-cell leukemia transcription factor 1 (PBX1).